Here is a 508-residue protein sequence, read N- to C-terminus: MASPMKSDFLAGSHMKLPKIGIAAAVAVVASIVIYLALSSFFVGTDEFKNDENQSIKEYPDNTRFMRFTHGKQLSKAGEDLAGSEPYLVRNGKSKELVIFAPEHLQEFHRKDANSHYKPENMNMGDYAGQLLGQCVGQLGGTKWKLARSHMDPEFSYRASRSMMKRFSQEIDSWVSHLSENPTRRSTQKDVFVQDVKKRCKDLSLRSIAISIYGETFSEENYAFLSTMNELHEKIIFVAFLNKRVMSKWYNKLPTAEKRLMDSFQTQWKAFNLAQIKLAREKKLSCPAEKIYVGVEAGDMSLPEFLQSLDEMLFTNIDITGSILALIFQHLAKDQAMQKKLRAEISAHRAQPGYTVGDYISKQNTLLHFSLLESIRVTPAMYFTLPECNASPKRIGGFHIPAHTPTIVDVNRLNKNESIWGTEADAFRPERFFGLDPARYRFGFVRWGIGRDKCLGKNMAEVILKLAILAVTDKYTLHVPPALPGQGEKSEAGFTINRDVEVEFRPAI.

A helical membrane pass occupies residues 22 to 42 (IAAAVAVVASIVIYLALSSFF). Asn53 and Asn416 each carry an N-linked (GlcNAc...) asparagine glycan. Cys454 contacts heme.

It belongs to the cytochrome P450 family. Heme serves as cofactor.

The protein resides in the membrane. Functionally, cytochrome P450 monooxygenase; part of the gene cluster 23 that mediates the biosynthesis of a family of 2-pyridones known as leporins. The hybrid PKS-NRPS synthetase lepA and the enoyl reductase lepG are responsible for fusion of phenylalanine with a hexaketide and subsequent release of the stable tetramic acid precursor, pre-leporin C. Because lepA lacks a designated enoylreductase (ER) domain, the required activity is provided the enoyl reductase lepG. It is possible that the dehydrogenase lepF also participates in production of pre-leporin C. Cytochrome P450 monooxygenase lepH is then required for the ring expansion step to yield leporin C. Leporin C is then presumably further oxidized by the N-hydroxylase lepD to form leporin B. LepI may possess a function in biosynthesis upstream of lepA. Leporin B is further oxidized in the presence of ferric ion to give the leporin B trimer-iron chelate, but whether or not this reaction is catalyzed by an enzyme in the pathway or by ferric ion is not determined yet. The sequence is that of Cytochrome P450 monooxygenase lepD from Aspergillus flavus (strain ATCC 200026 / FGSC A1120 / IAM 13836 / NRRL 3357 / JCM 12722 / SRRC 167).